A 453-amino-acid polypeptide reads, in one-letter code: Bifunctional protein GlmU (453 aa).

Positions 1–225 (MNIVILAAGT…EWETLGVNSK (225 aa)) are pyrophosphorylase. UDP-N-acetyl-alpha-D-glucosamine is bound by residues 6–9 (LAAG), lysine 20, glutamine 71, 76–77 (GT), 98–100 (YGD), glycine 135, glutamate 150, asparagine 165, and asparagine 223. A Mg(2+)-binding site is contributed by aspartate 100. Asparagine 223 is a Mg(2+) binding site. The tract at residues 226 to 246 (AQLAELERIHQRNIAEALLVD) is linker. The N-acetyltransferase stretch occupies residues 247–453 (GVTLADPARL…GYVRPVKKKS (207 aa)). Arginine 329 and lysine 347 together coordinate UDP-N-acetyl-alpha-D-glucosamine. The active-site Proton acceptor is histidine 359. UDP-N-acetyl-alpha-D-glucosamine contacts are provided by tyrosine 362 and asparagine 373. Acetyl-CoA contacts are provided by residues alanine 376, 382–383 (NY), serine 401, and alanine 419.

It in the N-terminal section; belongs to the N-acetylglucosamine-1-phosphate uridyltransferase family. The protein in the C-terminal section; belongs to the transferase hexapeptide repeat family. In terms of assembly, homotrimer. Requires Mg(2+) as cofactor.

It localises to the cytoplasm. It carries out the reaction alpha-D-glucosamine 1-phosphate + acetyl-CoA = N-acetyl-alpha-D-glucosamine 1-phosphate + CoA + H(+). The catalysed reaction is N-acetyl-alpha-D-glucosamine 1-phosphate + UTP + H(+) = UDP-N-acetyl-alpha-D-glucosamine + diphosphate. It participates in nucleotide-sugar biosynthesis; UDP-N-acetyl-alpha-D-glucosamine biosynthesis; N-acetyl-alpha-D-glucosamine 1-phosphate from alpha-D-glucosamine 6-phosphate (route II): step 2/2. It functions in the pathway nucleotide-sugar biosynthesis; UDP-N-acetyl-alpha-D-glucosamine biosynthesis; UDP-N-acetyl-alpha-D-glucosamine from N-acetyl-alpha-D-glucosamine 1-phosphate: step 1/1. Its pathway is bacterial outer membrane biogenesis; LPS lipid A biosynthesis. Its function is as follows. Catalyzes the last two sequential reactions in the de novo biosynthetic pathway for UDP-N-acetylglucosamine (UDP-GlcNAc). The C-terminal domain catalyzes the transfer of acetyl group from acetyl coenzyme A to glucosamine-1-phosphate (GlcN-1-P) to produce N-acetylglucosamine-1-phosphate (GlcNAc-1-P), which is converted into UDP-GlcNAc by the transfer of uridine 5-monophosphate (from uridine 5-triphosphate), a reaction catalyzed by the N-terminal domain. In Burkholderia lata (strain ATCC 17760 / DSM 23089 / LMG 22485 / NCIMB 9086 / R18194 / 383), this protein is Bifunctional protein GlmU.